The following is a 208-amino-acid chain: Glycerol-3-phosphate acyltransferase (208 aa).

Helical transmembrane passes span 3–23 (ILLA…VVVS), 51–71 (KAAI…VWLA), 78–98 (DVAI…PVFF), 115–135 (AVHP…AFFF), and 140–160 (LAAL…FGMP).

This sequence belongs to the PlsY family. Probably interacts with PlsX.

It localises to the cell inner membrane. It catalyses the reaction an acyl phosphate + sn-glycerol 3-phosphate = a 1-acyl-sn-glycero-3-phosphate + phosphate. The protein operates within lipid metabolism; phospholipid metabolism. Catalyzes the transfer of an acyl group from acyl-phosphate (acyl-PO(4)) to glycerol-3-phosphate (G3P) to form lysophosphatidic acid (LPA). This enzyme utilizes acyl-phosphate as fatty acyl donor, but not acyl-CoA or acyl-ACP. In Burkholderia orbicola (strain MC0-3), this protein is Glycerol-3-phosphate acyltransferase.